Reading from the N-terminus, the 487-residue chain is UDP-N-acetylmuramate--L-alanine ligase (487 aa).

129 to 135 (GTHGKTT) serves as a coordination point for ATP.

This sequence belongs to the MurCDEF family.

Its subcellular location is the cytoplasm. The enzyme catalyses UDP-N-acetyl-alpha-D-muramate + L-alanine + ATP = UDP-N-acetyl-alpha-D-muramoyl-L-alanine + ADP + phosphate + H(+). The protein operates within cell wall biogenesis; peptidoglycan biosynthesis. In terms of biological role, cell wall formation. In Aliivibrio salmonicida (strain LFI1238) (Vibrio salmonicida (strain LFI1238)), this protein is UDP-N-acetylmuramate--L-alanine ligase.